We begin with the raw amino-acid sequence, 167 residues long: Small ribosomal subunit protein uS9 (167 aa).

Residues 136–167 (KRAGFLTRDPRATERKKYGLKKARKAPQYSKR) form a disordered region. The span at 143–152 (RDPRATERKK) shows a compositional bias: basic and acidic residues. Over residues 153–167 (YGLKKARKAPQYSKR) the composition is skewed to basic residues.

It belongs to the universal ribosomal protein uS9 family.

The chain is Small ribosomal subunit protein uS9 from Nocardia farcinica (strain IFM 10152).